The chain runs to 277 residues: Energy-coupling factor transporter ATP-binding protein EcfA1 (277 aa).

An ABC transporter domain is found at 4–238 (IETQDLCHTY…PDLLSSVRLD (235 aa)). An ATP-binding site is contributed by 37-44 (GPNGAGKS).

The protein belongs to the ABC transporter superfamily. Energy-coupling factor EcfA family. As to quaternary structure, forms a stable energy-coupling factor (ECF) transporter complex composed of 2 membrane-embedded substrate-binding proteins (S component), 2 ATP-binding proteins (A component) and 2 transmembrane proteins (T component).

The protein resides in the cell membrane. Functionally, ATP-binding (A) component of a common energy-coupling factor (ECF) ABC-transporter complex. Unlike classic ABC transporters this ECF transporter provides the energy necessary to transport a number of different substrates. The chain is Energy-coupling factor transporter ATP-binding protein EcfA1 from Methanospirillum hungatei JF-1 (strain ATCC 27890 / DSM 864 / NBRC 100397 / JF-1).